We begin with the raw amino-acid sequence, 132 residues long: MATRHQVRQSIVSLLYAAQLNQENKDFINEFLDEKKIRNDQRKFTLDLYNGINEQLALLDEKINECLKEHKLDGVASIEKAILRLGAYEILFTSTQKAIIINEAIELAKEMAGDNAPKFINGVLDKINKEVQ.

The protein belongs to the NusB family.

Its function is as follows. Involved in transcription antitermination. Required for transcription of ribosomal RNA (rRNA) genes. Binds specifically to the boxA antiterminator sequence of the ribosomal RNA (rrn) operons. This is Transcription antitermination protein NusB from Campylobacter lari (strain RM2100 / D67 / ATCC BAA-1060).